The sequence spans 319 residues: ATP-dependent 6-phosphofructokinase 1 (319 aa).

Residue Gly11 participates in ATP binding. 21-25 contributes to the ADP binding site; that stretch reads RAVTR. ATP contacts are provided by residues 72–73 and 102–105; these read RC and GDGS. Residue Asp103 participates in Mg(2+) binding. 125-127 contributes to the substrate binding site; it reads TID. The Proton acceptor role is filled by Asp127. Position 154 (Arg154) interacts with ADP. Residues Arg162 and 169-171 each bind substrate; that span reads MGR. ADP-binding positions include 185 to 187 and 213 to 215; these read GAE and KTH. Substrate contacts are provided by residues Glu222, Arg243, and 249 to 252; that span reads HIQR.

It belongs to the phosphofructokinase type A (PFKA) family. ATP-dependent PFK group I subfamily. Prokaryotic clade 'B1' sub-subfamily. As to quaternary structure, homotetramer. It depends on Mg(2+) as a cofactor.

It is found in the cytoplasm. It carries out the reaction beta-D-fructose 6-phosphate + ATP = beta-D-fructose 1,6-bisphosphate + ADP + H(+). The protein operates within carbohydrate degradation; glycolysis; D-glyceraldehyde 3-phosphate and glycerone phosphate from D-glucose: step 3/4. With respect to regulation, allosterically activated by ADP and other diphosphonucleosides, and allosterically inhibited by phosphoenolpyruvate. In terms of biological role, catalyzes the phosphorylation of D-fructose 6-phosphate to fructose 1,6-bisphosphate by ATP, the first committing step of glycolysis. This is ATP-dependent 6-phosphofructokinase 1 from Clostridium perfringens (strain 13 / Type A).